The sequence spans 374 residues: DNA replication and repair protein RecF (374 aa).

ATP is bound at residue 34-41 (GDNGAGKT).

Belongs to the RecF family.

Its subcellular location is the cytoplasm. Its function is as follows. The RecF protein is involved in DNA metabolism; it is required for DNA replication and normal SOS inducibility. RecF binds preferentially to single-stranded, linear DNA. It also seems to bind ATP. This chain is DNA replication and repair protein RecF, found in Rhizobium johnstonii (strain DSM 114642 / LMG 32736 / 3841) (Rhizobium leguminosarum bv. viciae).